Here is a 126-residue protein sequence, read N- to C-terminus: Large ribosomal subunit protein uL22 (126 aa).

This sequence belongs to the universal ribosomal protein uL22 family. Part of the 50S ribosomal subunit.

Functionally, this protein binds specifically to 23S rRNA; its binding is stimulated by other ribosomal proteins, e.g. L4, L17, and L20. It is important during the early stages of 50S assembly. It makes multiple contacts with different domains of the 23S rRNA in the assembled 50S subunit and ribosome. Its function is as follows. The globular domain of the protein is located near the polypeptide exit tunnel on the outside of the subunit, while an extended beta-hairpin is found that lines the wall of the exit tunnel in the center of the 70S ribosome. This chain is Large ribosomal subunit protein uL22, found in Phenylobacterium zucineum (strain HLK1).